Reading from the N-terminus, the 89-residue chain is Three-finger toxin 3 (89 aa).

A signal peptide spans 1-16; that stretch reads MKTLLLILGVVAFVYL. 4 cysteine pairs are disulfide-bonded: C24/C47, C40/C66, C70/C81, and C82/C87.

Belongs to the three-finger toxin family. Ancestral subfamily. In terms of tissue distribution, expressed by the venom gland.

Its subcellular location is the secreted. The polypeptide is Three-finger toxin 3 (Sistrurus catenatus edwardsii (Desert massasauga)).